The primary structure comprises 96 residues: Aspartyl/glutamyl-tRNA(Asn/Gln) amidotransferase subunit C (96 aa).

The protein belongs to the GatC family. As to quaternary structure, heterotrimer of A, B and C subunits.

The catalysed reaction is L-glutamyl-tRNA(Gln) + L-glutamine + ATP + H2O = L-glutaminyl-tRNA(Gln) + L-glutamate + ADP + phosphate + H(+). It carries out the reaction L-aspartyl-tRNA(Asn) + L-glutamine + ATP + H2O = L-asparaginyl-tRNA(Asn) + L-glutamate + ADP + phosphate + 2 H(+). Its function is as follows. Allows the formation of correctly charged Asn-tRNA(Asn) or Gln-tRNA(Gln) through the transamidation of misacylated Asp-tRNA(Asn) or Glu-tRNA(Gln) in organisms which lack either or both of asparaginyl-tRNA or glutaminyl-tRNA synthetases. The reaction takes place in the presence of glutamine and ATP through an activated phospho-Asp-tRNA(Asn) or phospho-Glu-tRNA(Gln). The chain is Aspartyl/glutamyl-tRNA(Asn/Gln) amidotransferase subunit C from Chloroflexus aurantiacus (strain ATCC 29366 / DSM 635 / J-10-fl).